We begin with the raw amino-acid sequence, 344 residues long: Anthranilate phosphoribosyltransferase (344 aa).

5-phospho-alpha-D-ribose 1-diphosphate contacts are provided by residues glycine 86, 89-90 (GD), threonine 94, 96-99 (NIST), 114-122 (KHGNKSASG), and serine 126. Anthranilate is bound at residue glycine 86. Serine 98 is a Mg(2+) binding site. Position 117 (asparagine 117) interacts with anthranilate. Residue arginine 172 participates in anthranilate binding. The Mg(2+) site is built by aspartate 231 and glutamate 232.

Belongs to the anthranilate phosphoribosyltransferase family. In terms of assembly, homodimer. Mg(2+) is required as a cofactor.

The enzyme catalyses N-(5-phospho-beta-D-ribosyl)anthranilate + diphosphate = 5-phospho-alpha-D-ribose 1-diphosphate + anthranilate. The protein operates within amino-acid biosynthesis; L-tryptophan biosynthesis; L-tryptophan from chorismate: step 2/5. Catalyzes the transfer of the phosphoribosyl group of 5-phosphorylribose-1-pyrophosphate (PRPP) to anthranilate to yield N-(5'-phosphoribosyl)-anthranilate (PRA). This Prochlorococcus marinus (strain MIT 9301) protein is Anthranilate phosphoribosyltransferase.